The chain runs to 206 residues: 3-isopropylmalate dehydratase small subunit (206 aa).

This sequence belongs to the LeuD family. LeuD type 1 subfamily. In terms of assembly, heterodimer of LeuC and LeuD.

The catalysed reaction is (2R,3S)-3-isopropylmalate = (2S)-2-isopropylmalate. It functions in the pathway amino-acid biosynthesis; L-leucine biosynthesis; L-leucine from 3-methyl-2-oxobutanoate: step 2/4. Its function is as follows. Catalyzes the isomerization between 2-isopropylmalate and 3-isopropylmalate, via the formation of 2-isopropylmaleate. This chain is 3-isopropylmalate dehydratase small subunit, found in Leptospira borgpetersenii serovar Hardjo-bovis (strain L550).